A 328-amino-acid polypeptide reads, in one-letter code: Malate dehydrogenase (328 aa).

12–18 (GAAGQIG) is a binding site for NAD(+). Substrate contacts are provided by Arg-95 and Arg-101. NAD(+) contacts are provided by residues Asn-108, Gln-115, and 132–134 (VGN). Substrate is bound by residues Asn-134 and Arg-165. Catalysis depends on His-190, which acts as the Proton acceptor.

This sequence belongs to the LDH/MDH superfamily. MDH type 2 family.

It catalyses the reaction (S)-malate + NAD(+) = oxaloacetate + NADH + H(+). In terms of biological role, catalyzes the reversible oxidation of malate to oxaloacetate. In Polaromonas naphthalenivorans (strain CJ2), this protein is Malate dehydrogenase.